The following is a 440-amino-acid chain: Thymidine phosphorylase (440 aa).

This sequence belongs to the thymidine/pyrimidine-nucleoside phosphorylase family. In terms of assembly, homodimer.

The catalysed reaction is thymidine + phosphate = 2-deoxy-alpha-D-ribose 1-phosphate + thymine. Its pathway is pyrimidine metabolism; dTMP biosynthesis via salvage pathway; dTMP from thymine: step 1/2. Functionally, the enzymes which catalyze the reversible phosphorolysis of pyrimidine nucleosides are involved in the degradation of these compounds and in their utilization as carbon and energy sources, or in the rescue of pyrimidine bases for nucleotide synthesis. The protein is Thymidine phosphorylase of Yersinia pseudotuberculosis serotype O:1b (strain IP 31758).